The chain runs to 344 residues: MGFNLTFHLSYKFRLLLLLTLCLTVVGWATSNYFVGAIQEIPKAKEFMANFHKTLILGKGKTLTNEASTKKVELDNCPSVSPYLRGQSKLIFKPDLTLEEVQAENPKVSRGRYRPQECKALQRVAILVPHRNREKHLMYLLEHLHPFLQRQQLDYGIYVIHQAEGKKFNRAKLLNVGYLEALKEENWDCFIFHDVDLVPENDFNLYKCEEHPKHLVVGRNSTGYRLRYSGYFGGVTALSREQFFKVNGFSNNYWGWGGEDDDLRLRVELQRMKISRPLPEVGKYTMVFHTRDKGNEVNAERMKLLHQVSRVWRTDGLSSCSYKLVSVEHNPLYINITVDFWFGA.

At 1–12 the chain is on the cytoplasmic side; it reads MGFNLTFHLSYK. Residues 13 to 38 form a helical; Signal-anchor for type II membrane protein membrane-spanning segment; sequence FRLLLLLTLCLTVVGWATSNYFVGAI. Over 39–344 the chain is Lumenal; the sequence is QEIPKAKEFM…NITVDFWFGA (306 aa). Cys77 and Cys118 are joined by a disulfide. UDP-alpha-D-galactose contacts are provided by residues 129-133, 168-170, and 195-196; these read PHRNR, FNR, and VD. A disulfide bond links Cys189 and Cys208. Asp196 is a binding site for Mn(2+). Asn220 carries N-linked (GlcNAc...) asparagine glycosylation. Tyr224 and Trp256 together coordinate UDP-alpha-D-galactose. 258-261 lines the N-acetyl-D-glucosamine pocket; the sequence is GEDD. His289 is a Mn(2+) binding site. Position 289–291 (289–291) interacts with UDP-alpha-D-galactose; sequence HTR. Arg301 contributes to the N-acetyl-D-glucosamine binding site. Asn335 carries an N-linked (GlcNAc...) asparagine glycan.

The protein belongs to the glycosyltransferase 7 family. As to quaternary structure, interacts with SLC35A2 (isoform 2; UGT1). Mn(2+) serves as cofactor. Post-translationally, N-glycosylated. Highest expression is observed in placenta, pancreas, kidney and heart. Expressed in corneal epithelial cells.

The protein resides in the golgi apparatus membrane. It is found in the secreted. The catalysed reaction is N-acetyl-D-glucosamine + UDP-alpha-D-galactose = beta-D-galactosyl-(1-&gt;4)-N-acetyl-D-glucosamine + UDP + H(+). It carries out the reaction a beta-D-GlcNAc-(1-&gt;3)-beta-D-Gal-(1-&gt;4)-beta-D-Glc-(1&lt;-&gt;1)-Cer(d18:1(4E)) + UDP-alpha-D-galactose = a neolactoside nLc4Cer(d18:1(4E)) + UDP + H(+). The enzyme catalyses 3-O-{beta-D-galactosyl-(1-&gt;3)-[6-O-sulfo-N-acetyl-beta-D-glucosaminyl-(1-&gt;6)]-N-acetyl-alpha-D-galactosaminyl}-L-seryl-[protein] + UDP-alpha-D-galactose = 3-O-{beta-D-galactosyl-(1-&gt;3)-[beta-D-galactosyl-(1-&gt;4)-6-O-sulfo-N-acetyl-beta-D-glucosaminyl-(1-&gt;6)]-N-acetyl-alpha-D-galactosaminyl}-L-seryl-[protein] + UDP + H(+). It catalyses the reaction 3-O-{beta-D-galactosyl-(1-&gt;3)-[6-O-sulfo-N-acetyl-beta-D-glucosaminyl-(1-&gt;6)]-N-acetyl-alpha-D-galactosaminyl}-L-threonyl-[protein] + UDP-alpha-D-galactose = 3-O-{beta-D-galactosyl-(1-&gt;3)-[beta-D-galactosyl-(1-&gt;4)-6-O-sulfo-N-acetyl-beta-D-glucosaminyl-(1-&gt;6)]-N-acetyl-alpha-D-galactosaminyl}-L-threonyl-[protein] + UDP + H(+). It functions in the pathway protein modification; protein glycosylation. Its pathway is glycolipid biosynthesis. With respect to regulation, up-regulated by LALBA. Galactose (Gal) transferase involved in the synthesis of terminal N-acetyllactosamine (LacNac) unit present on glycan chains of glycoproteins and glycosphingolipids. Catalyzes the transfer of Gal residue via a beta1-&gt;4 linkage from UDP-Gal to the non-reducing terminal N-acetyl glucosamine 6-O-sulfate (6-O-sulfoGlcNAc) in the linearly growing chain of both N- and O-linked keratan sulfate proteoglycans. Cooperates with B3GNT7 N-acetyl glucosamine transferase and CHST6 and CHST1 sulfotransferases to construct and elongate mono- and disulfated disaccharide units [-&gt;3Galbeta1-&gt;4(6-sulfoGlcNAcbeta)1-&gt;] and [-&gt;3(6-sulfoGalbeta)1-&gt;4(6-sulfoGlcNAcbeta)1-&gt;] within keratan sulfate polymer. Transfers Gal residue via a beta1-&gt;4 linkage to terminal 6-O-sulfoGlcNAc within the LacNac unit of core 2 O-glycans forming 6-sulfo-sialyl-Lewis X (sLex). May contribute to the generation of sLex epitope on mucin-type glycoproteins that serve as ligands for SELL/L-selectin, a major regulator of leukocyte migration. In the biosynthesis pathway of neolacto-series glycosphingolipids, transfers Gal residue via a beta1-&gt;4 linkage to terminal GlcNAc of a lactotriaosylceramide (Lc3Cer) acceptor to form a neolactotetraosylceramide. This chain is Beta-1,4-galactosyltransferase 4, found in Homo sapiens (Human).